Reading from the N-terminus, the 154-residue chain is Protein E6 (154 aa).

2 zinc fingers span residues 34–70 (CVFCKKALTASEVYNFAYTDLRVVYRDGYPYGVCKFC) and 107–143 (CYRCQHPLTPEEKQLHCDYKKRFHKISHMWTGSCLTC).

The protein belongs to the papillomaviridae E6 protein family. Forms homodimers. Interacts with ubiquitin-protein ligase UBE3A/E6-AP; this interaction stimulates UBE3A ubiquitin activity. Interacts with host TP53 and EP300; this interaction inhibits TP53 activity.

Its subcellular location is the host cytoplasm. It localises to the host nucleus. Plays a major role in the induction and maintenance of cellular transformation. E6 associates with host UBE3A/E6-AP ubiquitin-protein ligase and modulates its activity. Sequesters tumor suppressor TP53 in the host cytoplasm and modulates its activity by interacting with host EP300 that results in the reduction of TP53 acetylation and activation. In turn, apoptosis induced by DNA damage is inhibited. E6 also protects host keratinocytes from apoptosis by mediating the degradation of host BAK1. May also inhibit host immune response. This Human papillomavirus type 53 protein is Protein E6.